The sequence spans 768 residues: Probable dipeptidyl peptidase 4 (768 aa).

The first 17 residues, 1 to 17, serve as a signal peptide directing secretion; the sequence is MKLGKWSVLLLVGCTAA. Residues N38, N81, N104, N113, N221, N282, and N468 are each glycosylated (N-linked (GlcNAc...) asparagine). Catalysis depends on S616, which acts as the Charge relay system. N668 is a glycosylation site (N-linked (GlcNAc...) asparagine). Residues D693 and H728 each act as charge relay system in the active site.

Belongs to the peptidase S9B family.

The protein resides in the secreted. It carries out the reaction Release of an N-terminal dipeptide, Xaa-Yaa-|-Zaa-, from a polypeptide, preferentially when Yaa is Pro, provided Zaa is neither Pro nor hydroxyproline.. Its function is as follows. Extracellular dipeptidyl-peptidase which removes N-terminal dipeptides sequentially from polypeptides having unsubstituted N-termini provided that the penultimate residue is proline. The sequence is that of Probable dipeptidyl peptidase 4 (dpp4) from Aspergillus clavatus (strain ATCC 1007 / CBS 513.65 / DSM 816 / NCTC 3887 / NRRL 1 / QM 1276 / 107).